We begin with the raw amino-acid sequence, 185 residues long: Elongation factor P (185 aa).

Belongs to the elongation factor P family.

Its subcellular location is the cytoplasm. Its pathway is protein biosynthesis; polypeptide chain elongation. In terms of biological role, involved in peptide bond synthesis. Stimulates efficient translation and peptide-bond synthesis on native or reconstituted 70S ribosomes in vitro. Probably functions indirectly by altering the affinity of the ribosome for aminoacyl-tRNA, thus increasing their reactivity as acceptors for peptidyl transferase. The protein is Elongation factor P of Endomicrobium trichonymphae.